The chain runs to 2313 residues: Histone-lysine N-methyltransferase Set2 (2313 aa).

Disordered regions lie at residues 1–115, 179–442, 550–858, 883–1106, 1118–1150, and 1163–1251; these read MEES…ASTS, AVGG…EETF, EPPL…LKAK, RLDE…KKAL, ETES…PFGD, and KRDK…SQGR. Positions 17 to 29 form a DNA-binding region, a.T hook 1; sequence GRGRGRPPKVALS. Residues 73-82 show a composition bias toward basic and acidic residues; that stretch reads IKFDVRDLLN. Over residues 101-115 the composition is skewed to low complexity; sequence STGHSQSGTTAASTS. Positions 197–209 form a DNA-binding region, a.T hook 2; the sequence is PRKRGRPRKSQLA. A compositionally biased stretch (low complexity) spans 221–241; it reads SCSDSDTNSTSTTTSNMSSDS. The segment covering 252-265 has biased composition (basic residues); it reads PKSKLRVSLKRLKL. A compositionally biased stretch (low complexity) spans 266–288; it reads GGRLESSDSGNSPSSSSPEVEPP. Basic and acidic residues predominate over residues 330–345; sequence ESPKGEEEQEEGRPVE. Composition is skewed to acidic residues over residues 347–356, 365–375, and 388–398; these read EPQDLIDIDM, PDPEEDLDEIM, and ADDEAEEEEDA. Thr404 carries the phosphothreonine modification. The span at 412–433 shows a compositional bias: low complexity; the sequence is ADSCSSAPRRSRRSAPLSGSSR. A compositionally biased stretch (basic and acidic residues) spans 552–563; sequence PLKDESDPKQTE. Residues 659 to 671 show a composition bias toward acidic residues; it reads EDYESNQEQVAED. A compositionally biased stretch (polar residues) spans 676–685; the sequence is CNNQKGQKQT. 4 stretches are compositionally biased toward basic and acidic residues: residues 689-708, 719-732, 740-749, and 758-782; these read EMKE…EKAM, VDKK…EKKV, VPEKKMDSKK, and KQKE…KSSA. Residues Ser786 and Ser788 each carry the phosphoserine modification. Composition is skewed to polar residues over residues 800-833, 918-928, and 938-955; these read AQWS…SNQP, KSLSGKTSLRR, and LERN…NTSA. Residues 959-969 show a composition bias toward basic residues; it reads KPSKVKKKINP. Residues 997 to 1010 show a composition bias toward low complexity; the sequence is SSPVSTSSDSSSKR. Over residues 1016–1039 the composition is skewed to basic and acidic residues; the sequence is TTSDLDGGSKLDQRRYTICEDRQP. Composition is skewed to low complexity over residues 1085–1097 and 1118–1127; these read SRQN…SSAS and ETESSESTSS. The span at 1163 to 1183 shows a compositional bias: basic and acidic residues; it reads KRDKVDEDQRKEGQDEVKREA. Over residues 1199-1213 the composition is skewed to low complexity; sequence TPATTPTPSPTQSNP. An AWS domain is found at 1307–1360; it reads NAEMQCDCFLTGDEEAQGHLSCGAGCINRMLMIECGPLCSNGARCTNKRFQQHQ. Zn(2+) is bound by residues Cys1312, Cys1314, Cys1328, Cys1332, Cys1341, Cys1345, and Cys1351. The 118-residue stretch at 1362–1479 folds into the SET domain; that stretch reads WPCRVFRTEK…PGEEITFDYQ (118 aa). Residues 1415-1417 and 1440-1441 each bind S-adenosyl-L-methionine; these read HYY and NH. Cys1443 serves as a coordination point for Zn(2+). Residues 1486–1502 enclose the Post-SET domain; sequence DAQRCYCEAANCRGWIG. S-adenosyl-L-methionine is bound at residue Gln1488. Cys1490 contacts Zn(2+). Tyr1491 contacts S-adenosyl-L-methionine. Residues Cys1492 and Cys1497 each contribute to the Zn(2+) site. Disordered stretches follow at residues 1501-1598 and 1763-1860; these read IGGE…KPKV and MKEH…RRTL. A compositionally biased stretch (acidic residues) spans 1505 to 1534; the sequence is PDSDEGEQLDEESDSDAEMDEEELEAEPEE. A compositionally biased stretch (basic residues) spans 1539-1551; it reads KSAKAKAKSKLKA. Basic and acidic residues-rich tracts occupy residues 1564-1574, 1763-1774, and 1784-1806; these read QTKPKDREYKA, MKEHEREADRQQ, and EDQR…RDTT. Positions 1817 to 1832 are enriched in polar residues; the sequence is SGNNTICTITTQQKGS. Positions 1840–1860 are enriched in basic and acidic residues; that stretch reads TRNDNRRRSDIGPPSEQRRTL. Residues 1963–1996 enclose the WW domain; that stretch reads DPLPPAWNWQVTSDGDIYYYNLRERISQWEPPSP. A phosphoserine mark is found at Ser2130 and Ser2131. Residues 2177–2218 are disordered; it reads LGTVGKRKLPMPPSVTVKKHRQEQRSKKVKSSQSPLTATSAR. Basic residues predominate over residues 2193–2206; sequence VKKHRQEQRSKKVK. A compositionally biased stretch (polar residues) spans 2207–2216; the sequence is SSQSPLTATS.

This sequence belongs to the class V-like SAM-binding methyltransferase superfamily. Histone-lysine methyltransferase family. SET2 subfamily. As to quaternary structure, interacts with (phosphorylated) Polr2A.

The protein localises to the nucleus. It is found in the chromosome. The enzyme catalyses L-lysyl(36)-[histone H3] + 3 S-adenosyl-L-methionine = N(6),N(6),N(6)-trimethyl-L-lysyl(36)-[histone H3] + 3 S-adenosyl-L-homocysteine + 3 H(+). Histone methyltransferase that specifically trimethylates 'Lys-36' of histone H3 (H3K36me3). Represents the main enzyme generating H3K36me3, a specific tag for epigenetic transcriptional activation. Involved in dosage compensation in males (X chromosome dosage compensation) by mediating formation of H3K36me3, a mark recognized by msl-3 component of the MSL complex. In addition to its role in dosage compensation in males, promotes germline stem cell differentiation in females: catalyzes formation of H3K36me3, promoting recruitment of msl-3 and subsequent recruitment of the ATAC complex, leading to transcription of genes, such as RpS19b. This chain is Histone-lysine N-methyltransferase Set2, found in Drosophila melanogaster (Fruit fly).